The primary structure comprises 680 residues: Leucine-rich repeat and calponin homology domain-containing protein 4 (680 aa).

Residues 1–22 (MAAAVAGPLAAGGEEAAASVSL) are compositionally biased toward low complexity. The disordered stretch occupies residues 1–35 (MAAAVAGPLAAGGEEAAASVSLPGSPGLPGSRSAE). 9 LRR repeats span residues 41–64 (AVAT…AARS), 67–90 (LSDI…ACQL), 92–113 (SLEG…LGNL), 114–136 (TALT…ICQL), 138–158 (LRVL…ISTL), 159–181 (GSLR…LCSL), 182–204 (RSLR…LGDL), 206–226 (LVRL…FCRL), and 227–250 (RHLQ…CLKG). Phosphoserine occurs at positions 279, 281, 304, 307, 309, and 313. Residues 329–528 (SELARDPRGP…PSSPESVLRP (200 aa)) are disordered. Positions 330 to 345 (ELARDPRGPRQPREDG) are enriched in basic and acidic residues. Over residues 346–355 (AGDGDLEQID) the composition is skewed to acidic residues. Composition is skewed to basic and acidic residues over residues 357-371 (IDSH…RSAA) and 385-418 (DVEK…ERKQ). Serine 432 is modified (phosphoserine). Low complexity-rich tracts occupy residues 440–453 (AAGA…TQAT) and 510–528 (RSSS…VLRP). A phosphoserine mark is found at serine 511, serine 513, serine 517, serine 521, and serine 586. Positions 531-644 (FPQEKELISQ…VLEAVILVGG (114 aa)) constitute a Calponin-homology (CH) domain. The chain crosses the membrane as a helical span at residues 655-675 (GLGGFLLFYVVFMLLLYVVYT).

Widely expressed across tissues, with the most abundant expression in spleen, testes, thymus, intestine, and blood. Expressed in macrophages.

The protein localises to the cell membrane. Accessory protein that regulates signaling by multiple TLRs, acting as a broad-spanning regulator of the innate immune response. In macrophages, binds LPS and promotes proper docking of LPS in lipid raft membrane. May be required for lipid raft maintenance. This chain is Leucine-rich repeat and calponin homology domain-containing protein 4 (Lrch4), found in Mus musculus (Mouse).